We begin with the raw amino-acid sequence, 154 residues long: MPLFNMHQIRGQLGRDQRLLGLDPGQKTIGLALSDVSLMLASPYGALRRGKLSVVAAEIRRIAAREGVGGLVSGLPLSMDGSFGPAAQAARDWMISLSEQVGLPAAMWDERLSSSAVNRMLIQDADMTRQRRAELVDKLAASYMLQGALDATAE.

It belongs to the YqgF nuclease family.

It localises to the cytoplasm. Functionally, could be a nuclease involved in processing of the 5'-end of pre-16S rRNA. The protein is Putative pre-16S rRNA nuclease of Gluconacetobacter diazotrophicus (strain ATCC 49037 / DSM 5601 / CCUG 37298 / CIP 103539 / LMG 7603 / PAl5).